A 437-amino-acid polypeptide reads, in one-letter code: Purple acid phosphatase 18 (437 aa).

The signal sequence occupies residues M1–A23. Fe cation contacts are provided by D148, D175, and Y178. Position 175 (D175) interacts with Zn(2+). Zn(2+)-binding residues include N208 and H291. Position 208 (N208) interacts with substrate. Catalysis depends on H301, which acts as the Proton donor. H328 provides a ligand contact to Zn(2+). H328 to H330 serves as a coordination point for substrate. H330 contributes to the Fe cation binding site. N-linked (GlcNAc...) asparagine glycosylation occurs at N390.

The protein belongs to the metallophosphoesterase superfamily. Purple acid phosphatase family. Homodimer. Fe cation serves as cofactor. It depends on Zn(2+) as a cofactor. In terms of tissue distribution, expressed in roots, stems, leaves, flowers and siliques.

The protein localises to the secreted. The enzyme catalyses a phosphate monoester + H2O = an alcohol + phosphate. In Arabidopsis thaliana (Mouse-ear cress), this protein is Purple acid phosphatase 18 (PAP18).